The sequence spans 380 residues: Succinyl-diaminopimelate desuccinylase (380 aa).

His69 lines the Zn(2+) pocket. Residue Asp71 is part of the active site. A Zn(2+)-binding site is contributed by Asp102. Glu135 serves as the catalytic Proton acceptor. The Zn(2+) site is built by Glu136, Glu164, and His353.

This sequence belongs to the peptidase M20A family. DapE subfamily. As to quaternary structure, homodimer. Zn(2+) serves as cofactor. It depends on Co(2+) as a cofactor.

It catalyses the reaction N-succinyl-(2S,6S)-2,6-diaminopimelate + H2O = (2S,6S)-2,6-diaminopimelate + succinate. It functions in the pathway amino-acid biosynthesis; L-lysine biosynthesis via DAP pathway; LL-2,6-diaminopimelate from (S)-tetrahydrodipicolinate (succinylase route): step 3/3. In terms of biological role, catalyzes the hydrolysis of N-succinyl-L,L-diaminopimelic acid (SDAP), forming succinate and LL-2,6-diaminopimelate (DAP), an intermediate involved in the bacterial biosynthesis of lysine and meso-diaminopimelic acid, an essential component of bacterial cell walls. The protein is Succinyl-diaminopimelate desuccinylase of Phenylobacterium zucineum (strain HLK1).